A 419-amino-acid polypeptide reads, in one-letter code: Tyrosine--tRNA ligase (419 aa).

Residue Tyr-34 coordinates L-tyrosine. Residues Pro-39–Asn-48 carry the 'HIGH' region motif. The L-tyrosine site is built by Tyr-169 and Gln-173. The 'KMSKS' region motif lies at Lys-230–Thr-234. ATP is bound at residue Lys-233. In terms of domain architecture, S4 RNA-binding spans Val-352 to Ala-419.

It belongs to the class-I aminoacyl-tRNA synthetase family. TyrS type 1 subfamily. In terms of assembly, homodimer.

Its subcellular location is the cytoplasm. The catalysed reaction is tRNA(Tyr) + L-tyrosine + ATP = L-tyrosyl-tRNA(Tyr) + AMP + diphosphate + H(+). In terms of biological role, catalyzes the attachment of tyrosine to tRNA(Tyr) in a two-step reaction: tyrosine is first activated by ATP to form Tyr-AMP and then transferred to the acceptor end of tRNA(Tyr). The protein is Tyrosine--tRNA ligase of Bacillus caldotenax.